The following is a 140-amino-acid chain: Protein ARABIDOPSIS THALIANA ANTHER 7 (140 aa).

The signal sequence occupies residues 1–20 (MKIHAILVVAFLVLMKTAVS). Intrachain disulfides connect C29/C87, C39/C54, C55/C111, and C85/C125.

It belongs to the plant LTP family. Tapetum-specific. Also present in pollen.

Its subcellular location is the endoplasmic reticulum lumen. The chain is Protein ARABIDOPSIS THALIANA ANTHER 7 from Arabidopsis thaliana (Mouse-ear cress).